Here is a 940-residue protein sequence, read N- to C-terminus: Lon protease homolog 1, mitochondrial (940 aa).

Residues 1–61 constitute a mitochondrion transit peptide; sequence MLKLFTSSAS…AFFCSEPTNG (61 aa). Residues 70–90 are disordered; sequence KAVESDSEVSDSKSSSAIVPT. Serine 74 carries the phosphoserine modification. The Lon N-terminal domain occupies 100–309; that stretch reads VLALPVPHRP…LTLELMKKEM (210 aa). 464–471 contributes to the ATP binding site; the sequence is GPPGVGKT. The Lon proteolytic domain maps to 751 to 935; that stretch reads QTPVGVVMGL…GKIFELAFGY (185 aa). Active-site residues include serine 841 and lysine 884.

It belongs to the peptidase S16 family. In terms of assembly, homohexamer or homoheptamer. Organized in a ring with a central cavity.

It localises to the mitochondrion matrix. The catalysed reaction is Hydrolysis of proteins in presence of ATP.. Functionally, ATP-dependent serine protease that mediates the selective degradation of misfolded, unassembled or oxidatively damaged polypeptides as well as certain short-lived regulatory proteins in the mitochondrial matrix. May also have a chaperone function in the assembly of inner membrane protein complexes. Participates in the regulation of mitochondrial gene expression and in the maintenance of the integrity of the mitochondrial genome. Binds to mitochondrial DNA in a site-specific manner. This Arabidopsis thaliana (Mouse-ear cress) protein is Lon protease homolog 1, mitochondrial (LON1).